The chain runs to 111 residues: Protein EARLY FLOWERING 4 (111 aa).

Positions 1–26 (MKRNGETKRRRNVAEEAEQGEDPAMW) are disordered. At serine 45 the chain carries Phosphoserine. The segment at 90-111 (FSSGFHGGKNGHDGGGAAGTRA) is disordered. Over residues 94-111 (FHGGKNGHDGGGAAGTRA) the composition is skewed to gly residues.

Belongs to the EARLY FLOWERING 4 family. Homodimer. Interacts with ELF3.

The protein resides in the nucleus. Its function is as follows. Component of the central CCA1/LHY-TOC1 feedback loop in the circadian clock that promotes clock accuracy and is required for sustained rhythms in the absence of daily light/dark cycles. Part of a corepressor complex consisting of ELF4, ELF3, and LUX involved in the transcriptional regulation of APRR9. Increases ELF3 nuclear distribution and localization in nuclear bodies. Required for responsiveness to continuous red, by regulating phytochrome B (phyB) signaling (including during seedling de-etiolation) and gene expression. Mediates both entrainment to an environmental cycle and circadian rhythm sustainability under constant conditions. Controls flowering time. Necessary for light-induced expression of both CCA1 and LHY. This chain is Protein EARLY FLOWERING 4 (ELF4), found in Arabidopsis thaliana (Mouse-ear cress).